Here is a 435-residue protein sequence, read N- to C-terminus: Eukaryotic peptide chain release factor subunit 1-2 (435 aa).

Alanine 2 carries the post-translational modification N-acetylalanine.

The protein belongs to the eukaryotic release factor 1 family. Heterodimer of two subunits, one of which binds GTP. Interacts with OR.

Its subcellular location is the cytoplasm. Directs the termination of nascent peptide synthesis (translation) in response to the termination codons UAA, UAG and UGA. Modulates plant growth and development. This is Eukaryotic peptide chain release factor subunit 1-2 from Brassica oleracea var. botrytis (Cauliflower).